The primary structure comprises 448 residues: tRNA(Ile)-lysidine synthase (448 aa).

29–34 (SGGVDS) contributes to the ATP binding site.

Belongs to the tRNA(Ile)-lysidine synthase family.

The protein localises to the cytoplasm. The enzyme catalyses cytidine(34) in tRNA(Ile2) + L-lysine + ATP = lysidine(34) in tRNA(Ile2) + AMP + diphosphate + H(+). Functionally, ligates lysine onto the cytidine present at position 34 of the AUA codon-specific tRNA(Ile) that contains the anticodon CAU, in an ATP-dependent manner. Cytidine is converted to lysidine, thus changing the amino acid specificity of the tRNA from methionine to isoleucine. The protein is tRNA(Ile)-lysidine synthase of Azoarcus sp. (strain BH72).